The sequence spans 393 residues: NAD(P)H-quinone oxidoreductase subunit H, chloroplastic (393 aa).

The protein belongs to the complex I 49 kDa subunit family. In terms of assembly, NDH is composed of at least 16 different subunits, 5 of which are encoded in the nucleus.

It localises to the plastid. The protein localises to the chloroplast thylakoid membrane. The catalysed reaction is a plastoquinone + NADH + (n+1) H(+)(in) = a plastoquinol + NAD(+) + n H(+)(out). The enzyme catalyses a plastoquinone + NADPH + (n+1) H(+)(in) = a plastoquinol + NADP(+) + n H(+)(out). Functionally, NDH shuttles electrons from NAD(P)H:plastoquinone, via FMN and iron-sulfur (Fe-S) centers, to quinones in the photosynthetic chain and possibly in a chloroplast respiratory chain. The immediate electron acceptor for the enzyme in this species is believed to be plastoquinone. Couples the redox reaction to proton translocation, and thus conserves the redox energy in a proton gradient. The polypeptide is NAD(P)H-quinone oxidoreductase subunit H, chloroplastic (Solanum tuberosum (Potato)).